Consider the following 81-residue polypeptide: Omega-conotoxin-like Vc6.4 (81 aa).

An N-terminal signal peptide occupies residues 1–22 (MKLTCVMIVAVLFLTANTFVTA). A propeptide spanning residues 23–51 (VPHSSNVLENLYLKARHEMENPEASKLNT) is cleaved from the precursor. 3 cysteine pairs are disulfide-bonded: Cys55/Cys72, Cys62/Cys76, and Cys71/Cys80.

The protein belongs to the conotoxin O1 superfamily. As to expression, expressed by the venom duct.

It is found in the secreted. In terms of biological role, omega-conotoxins act at presynaptic membranes, they bind and block voltage-gated calcium channels. Act on high voltage-activated (HVA) calcium currents in molluscan neurons. The chain is Omega-conotoxin-like Vc6.4 from Conus victoriae (Queen Victoria cone).